The sequence spans 449 residues: Tubulin alpha chain (449 aa).

The MREC motif signature appears at 1–4 (MREC). A GTP-binding site is contributed by Gln-11. Lys-40 is modified (N6-acetyllysine). Positions 71, 140, 144, 145, 179, 206, and 228 each coordinate GTP. Glu-71 lines the Mg(2+) pocket. Glu-254 is a catalytic residue. 5-glutamyl polyglutamate is present on Glu-443.

Belongs to the tubulin family. As to quaternary structure, dimer of alpha and beta chains. A typical microtubule is a hollow water-filled tube with an outer diameter of 25 nm and an inner diameter of 15 nM. Alpha-beta heterodimers associate head-to-tail to form protofilaments running lengthwise along the microtubule wall with the beta-tubulin subunit facing the microtubule plus end conferring a structural polarity. Microtubules usually have 13 protofilaments but different protofilament numbers can be found in some organisms and specialized cells. Mg(2+) serves as cofactor. In terms of processing, some glutamate residues at the C-terminus are polyglycylated, resulting in polyglycine chains on the gamma-carboxyl group. Glycylation is mainly limited to tubulin incorporated into axonemes (cilia and flagella) whereas glutamylation is prevalent in neuronal cells, centrioles, axonemes, and the mitotic spindle. Both modifications can coexist on the same protein on adjacent residues, and lowering polyglycylation levels increases polyglutamylation, and reciprocally. The precise function of polyglycylation is still unclear. Some glutamate residues at the C-terminus are polyglutamylated, resulting in polyglutamate chains on the gamma-carboxyl group. Polyglutamylation plays a key role in microtubule severing by spastin (SPAST). SPAST preferentially recognizes and acts on microtubules decorated with short polyglutamate tails: severing activity by SPAST increases as the number of glutamates per tubulin rises from one to eight, but decreases beyond this glutamylation threshold. Post-translationally, acetylation of alpha chains at Lys-40 is located inside the microtubule lumen. This modification has been correlated with increased microtubule stability, intracellular transport and ciliary assembly. In terms of processing, undergoes a tyrosination/detyrosination cycle, the cyclic removal and re-addition of a C-terminal tyrosine residue by the enzymes tubulin tyrosine carboxypeptidase (MATCAP1, VASH1 or VASH2) and tubulin tyrosine ligase (TTL), respectively. Tyrosination promotes microtubule interaction with CAP-Gly microtubule plus-end tracking proteins. Tyrosinated tubulins regulate the initiation of dynein-driven motility. Post-translationally, detyrosination is involved in metaphase plate congression by guiding chromosomes during mitosis. Detyrosination increases microtubules-dependent mechanotransduction in dystrophic cardiac and skeletal muscle. In cardiomyocytes, detyrosinated microtubules are required to resist to contractile compression during contraction.

The protein localises to the cytoplasm. Its subcellular location is the cytoskeleton. It carries out the reaction GTP + H2O = GDP + phosphate + H(+). In terms of biological role, tubulin is the major constituent of microtubules, a cylinder consisting of laterally associated linear protofilaments composed of alpha- and beta-tubulin heterodimers. Microtubules grow by the addition of GTP-tubulin dimers to the microtubule end, where a stabilizing cap forms. Below the cap, tubulin dimers are in GDP-bound state, owing to GTPase activity of alpha-tubulin. In Xenopus tropicalis (Western clawed frog), this protein is Tubulin alpha chain (tuba).